A 515-amino-acid chain; its full sequence is Bifunctional purine biosynthesis protein PurH (515 aa).

In terms of domain architecture, MGS-like spans 1 to 145; that stretch reads MTKRVLISVS…KNHASVTVVV (145 aa).

It belongs to the PurH family.

The catalysed reaction is (6R)-10-formyltetrahydrofolate + 5-amino-1-(5-phospho-beta-D-ribosyl)imidazole-4-carboxamide = 5-formamido-1-(5-phospho-D-ribosyl)imidazole-4-carboxamide + (6S)-5,6,7,8-tetrahydrofolate. It catalyses the reaction IMP + H2O = 5-formamido-1-(5-phospho-D-ribosyl)imidazole-4-carboxamide. It participates in purine metabolism; IMP biosynthesis via de novo pathway; 5-formamido-1-(5-phospho-D-ribosyl)imidazole-4-carboxamide from 5-amino-1-(5-phospho-D-ribosyl)imidazole-4-carboxamide (10-formyl THF route): step 1/1. Its pathway is purine metabolism; IMP biosynthesis via de novo pathway; IMP from 5-formamido-1-(5-phospho-D-ribosyl)imidazole-4-carboxamide: step 1/1. This chain is Bifunctional purine biosynthesis protein PurH, found in Streptococcus pneumoniae serotype 2 (strain D39 / NCTC 7466).